The primary structure comprises 275 residues: Urease accessory protein UreD (275 aa).

Belongs to the UreD family. UreD, UreF and UreG form a complex that acts as a GTP-hydrolysis-dependent molecular chaperone, activating the urease apoprotein by helping to assemble the nickel containing metallocenter of UreC. The UreE protein probably delivers the nickel.

It localises to the cytoplasm. Its function is as follows. Required for maturation of urease via the functional incorporation of the urease nickel metallocenter. This Cereibacter sphaeroides (strain ATCC 17029 / ATH 2.4.9) (Rhodobacter sphaeroides) protein is Urease accessory protein UreD.